Consider the following 432-residue polypeptide: Adenylosuccinate synthetase (432 aa).

GTP contacts are provided by residues 13 to 19 (GDEGKGK) and 41 to 43 (GHT). Catalysis depends on D14, which acts as the Proton acceptor. 2 residues coordinate Mg(2+): D14 and G41. IMP-binding positions include 14-17 (DEGK), 39-42 (NAGH), T130, R144, Q225, T240, and R304. The active-site Proton donor is the H42. 300–306 (AVTGRPR) is a binding site for substrate. GTP-binding positions include R306, 332-334 (KLD), and 415-417 (STG).

This sequence belongs to the adenylosuccinate synthetase family. In terms of assembly, homodimer. The cofactor is Mg(2+).

The protein localises to the cytoplasm. The catalysed reaction is IMP + L-aspartate + GTP = N(6)-(1,2-dicarboxyethyl)-AMP + GDP + phosphate + 2 H(+). It functions in the pathway purine metabolism; AMP biosynthesis via de novo pathway; AMP from IMP: step 1/2. Its function is as follows. Plays an important role in the de novo pathway of purine nucleotide biosynthesis. Catalyzes the first committed step in the biosynthesis of AMP from IMP. The chain is Adenylosuccinate synthetase from Actinobacillus pleuropneumoniae serotype 5b (strain L20).